We begin with the raw amino-acid sequence, 331 residues long: Ketol-acid reductoisomerase (NADP(+)) (331 aa).

Positions 2-182 (ARMYYDEDGN…GGTRAGILET (181 aa)) constitute a KARI N-terminal Rossmann domain. NADP(+)-binding positions include 25-28 (YGSQ), serine 51, serine 53, and 83-86 (DEVQ). Histidine 108 is an active-site residue. Residue glycine 134 participates in NADP(+) binding. The 146-residue stretch at 183-328 (SFREETETDL…KDLRAMFSWL (146 aa)) folds into the KARI C-terminal knotted domain. Mg(2+) is bound by residues aspartate 191, glutamate 195, glutamate 227, and glutamate 231. Serine 252 lines the substrate pocket.

The protein belongs to the ketol-acid reductoisomerase family. Mg(2+) is required as a cofactor.

It catalyses the reaction (2R)-2,3-dihydroxy-3-methylbutanoate + NADP(+) = (2S)-2-acetolactate + NADPH + H(+). The catalysed reaction is (2R,3R)-2,3-dihydroxy-3-methylpentanoate + NADP(+) = (S)-2-ethyl-2-hydroxy-3-oxobutanoate + NADPH + H(+). It functions in the pathway amino-acid biosynthesis; L-isoleucine biosynthesis; L-isoleucine from 2-oxobutanoate: step 2/4. It participates in amino-acid biosynthesis; L-valine biosynthesis; L-valine from pyruvate: step 2/4. Its function is as follows. Involved in the biosynthesis of branched-chain amino acids (BCAA). Catalyzes an alkyl-migration followed by a ketol-acid reduction of (S)-2-acetolactate (S2AL) to yield (R)-2,3-dihydroxy-isovalerate. In the isomerase reaction, S2AL is rearranged via a Mg-dependent methyl migration to produce 3-hydroxy-3-methyl-2-ketobutyrate (HMKB). In the reductase reaction, this 2-ketoacid undergoes a metal-dependent reduction by NADPH to yield (R)-2,3-dihydroxy-isovalerate. The protein is Ketol-acid reductoisomerase (NADP(+)) of Gloeothece citriformis (strain PCC 7424) (Cyanothece sp. (strain PCC 7424)).